Reading from the N-terminus, the 476-residue chain is Protein transport protein Sec61 subunit alpha isoform A (476 aa).

Over 2–33 (GIKFLEVIKPFCAVLPEIQKPERKIQFREKVL) the chain is Cytoplasmic. Residues 34–53 (WTAITLFIFLVCCQIPLFGI) form a helical membrane-spanning segment. The Lumenal portion of the chain corresponds to 54–76 (MSSDSADPFYWMRVILASNRGTL). Residues 77 to 96 (MELGISPIVTSGLIMQLLAG) form a helical membrane-spanning segment. The Cytoplasmic segment spans residues 97–117 (AKIIEVGDTPKDRALFNGAQK). Residues 118-138 (LFGMIITIGQSIVYVMTGMYG) traverse the membrane as a helical segment. Residues 139-144 (DPSEMG) are Lumenal-facing. A helical transmembrane segment spans residues 145–165 (AGICLLIIIQLFVAGLIVLLL). Residues 166 to 172 (DELLQKG) lie on the Cytoplasmic side of the membrane. Residues 173–193 (YGLGSGISLFIATNICETIVW) traverse the membrane as a helical segment. The Lumenal segment spans residues 194-240 (KAFSPTTVNTGRGTEFEGAIIALFHLLATRTDKVRALREAFYRQNLP). The chain crosses the membrane as a helical span at residues 241–261 (NLLNLIATVFVFAVVIYFQGF). Residues 262–288 (RVDLPIKSARYRGQYNTYPIKLFYTSN) lie on the Cytoplasmic side of the membrane. Residues 289-309 (IPIILQSALVSNLYVISQMLS) form a helical membrane-spanning segment. At 310–354 (TRFSGNFLVNLLGTWSDTSTGGPARAYPVGGLCYFLSPPESFGSV) the chain is on the lumenal side. The helical transmembrane segment at 355–375 (LDDPIHAAIYIVFMLGSCAFF) threads the bilayer. At 376–420 (SKTWIEVSGSSAKDVAKQLKEQQMVMGGHRETSMVHELNRYIPTA) the chain is on the cytoplasmic side. The chain crosses the membrane as a helical span at residues 421–441 (AAFGGLCIGGLSVMADFLGAI). Over 442–445 (GSGT) the chain is Lumenal. The helical transmembrane segment at 446 to 462 (GILLAVTIIYQYFEIFV) threads the bilayer. At 463–476 (KEQSEMGSMGALLF) the chain is on the cytoplasmic side.

It belongs to the SecY/SEC61-alpha family. As to quaternary structure, the SEC61 channel-forming translocon complex consists of channel-forming core components SEC61A1, SEC61B and SEC61G and different auxiliary components such as SEC62 and SEC63. The SEC61 channel associates with the multi-pass translocon (MPT) complex.

The protein localises to the endoplasmic reticulum membrane. In terms of biological role, component of SEC61 channel-forming translocon complex that mediates transport of signal peptide-containing precursor polypeptides across the endoplasmic reticulum (ER). Forms a ribosome receptor and a gated pore in the ER membrane, both functions required for cotranslational translocation of nascent polypeptides. May cooperate with auxiliary protein SEC62, SEC63 and HSPA5/BiP to enable post-translational transport of small presecretory proteins. The SEC61 channel is also involved in ER membrane insertion of transmembrane proteins: it mediates membrane insertion of the first few transmembrane segments of proteins, while insertion of subsequent transmembrane regions of multi-pass membrane proteins is mediated by the multi-pass translocon (MPT) complex. The chain is Protein transport protein Sec61 subunit alpha isoform A (sec61aa) from Oncorhynchus mykiss (Rainbow trout).